The primary structure comprises 308 residues: Probable manganese-dependent inorganic pyrophosphatase (308 aa).

Mn(2+)-binding residues include H9, D13, D15, D75, H97, and D149.

It belongs to the PPase class C family. Mn(2+) is required as a cofactor.

It is found in the cytoplasm. The catalysed reaction is diphosphate + H2O = 2 phosphate + H(+). In Bacillus pumilus (strain SAFR-032), this protein is Probable manganese-dependent inorganic pyrophosphatase.